A 319-amino-acid polypeptide reads, in one-letter code: Large ribosomal subunit protein uL29m (319 aa).

The tract at residues 1–55 (MWKRSFHSQGGPLRARTKFTKPKPKQPVLPKDKIRPPTQLTHHSNNLRITEPIPP) is disordered. Residues 15–24 (ARTKFTKPKP) are compositionally biased toward basic residues. Residues 38-48 (TQLTHHSNNLR) show a composition bias toward polar residues.

The protein belongs to the universal ribosomal protein uL29 family. Component of the mitochondrial large ribosomal subunit. Mature mitochondrial ribosomes consist of a small (37S) and a large (54S) subunit. The 37S subunit contains at least 33 different proteins and 1 molecule of RNA (15S). The 54S subunit contains at least 45 different proteins and 1 molecule of RNA (21S).

It localises to the mitochondrion. In Saccharomyces cerevisiae (strain YJM789) (Baker's yeast), this protein is Large ribosomal subunit protein uL29m (MRPL4).